A 583-amino-acid chain; its full sequence is Chromosomal replication initiator protein DnaA (583 aa).

The tract at residues 1-91 (MNAENLDPAT…SPMFPAFKVM (91 aa)) is domain I, interacts with DnaA modulators. 2 disordered regions span residues 86–179 (PAFK…QQPV) and 197–232 (VAGF…NYRD). Residues 91 to 235 (MPPAQPEPQT…VTGNYRDPVT (145 aa)) form a domain II region. A compositionally biased stretch (polar residues) spans 97–106 (EPQTTASPED). Composition is skewed to basic and acidic residues over residues 126–135 (EDSRTPRHSA) and 147–174 (QERE…EHEP). Residues 205 to 226 (AGTTAPQYPPQSEMQGSFTPGV) show a composition bias toward polar residues. The tract at residues 236–460 (HLNSNDTFDT…GALKRVIAMA (225 aa)) is domain III, AAA+ region. Positions 280, 282, 283, and 284 each coordinate ATP. Residues 461 to 583 (SLNHQPVTRA…TVELKQHLND (123 aa)) form a domain IV, binds dsDNA region.

Belongs to the DnaA family. In terms of assembly, oligomerizes as a right-handed, spiral filament on DNA at oriC.

The protein resides in the cytoplasm. In terms of biological role, plays an essential role in the initiation and regulation of chromosomal replication. ATP-DnaA binds to the origin of replication (oriC) to initiate formation of the DNA replication initiation complex once per cell cycle. Binds the DnaA box (a 9 base pair repeat at the origin) and separates the double-stranded (ds)DNA. Forms a right-handed helical filament on oriC DNA; dsDNA binds to the exterior of the filament while single-stranded (ss)DNA is stabiized in the filament's interior. The ATP-DnaA-oriC complex binds and stabilizes one strand of the AT-rich DNA unwinding element (DUE), permitting loading of DNA polymerase. After initiation quickly degrades to an ADP-DnaA complex that is not apt for DNA replication. Binds acidic phospholipids. The sequence is that of Chromosomal replication initiator protein DnaA from Bifidobacterium animalis subsp. lactis (strain AD011).